A 200-amino-acid polypeptide reads, in one-letter code: MTAQVDAVILAGGMARRMGGNDKGLVELENRPMIEHAIERIQPQVKEILINANRNQNRYSEFGFKVISDQDTGYLGPLAGMITAMSNTDAEYLLVIPCDCPLLPTDLVARMLAKLTAEDAELAVASDGKREQPVVMLLKPSLRASMKAFLDAGERKIDFWYAKHHYVVAEFSDQPNAFVNVNTPEQKQQLGEAIANEKNY.

GTP is bound by residues 10 to 12 (LAG), K23, N51, D69, and D99. A Mg(2+)-binding site is contributed by D99.

The protein belongs to the MobA family. In terms of assembly, monomer. Requires Mg(2+) as cofactor.

The protein localises to the cytoplasm. It catalyses the reaction Mo-molybdopterin + GTP + H(+) = Mo-molybdopterin guanine dinucleotide + diphosphate. Transfers a GMP moiety from GTP to Mo-molybdopterin (Mo-MPT) cofactor (Moco or molybdenum cofactor) to form Mo-molybdopterin guanine dinucleotide (Mo-MGD) cofactor. The polypeptide is Molybdenum cofactor guanylyltransferase (Shewanella halifaxensis (strain HAW-EB4)).